We begin with the raw amino-acid sequence, 429 residues long: 5-methylthioadenosine/S-adenosylhomocysteine deaminase (429 aa).

Residues histidine 66 and histidine 68 each coordinate Zn(2+). Glutamate 95, arginine 147, arginine 158, and histidine 181 together coordinate substrate. Histidine 208 provides a ligand contact to Zn(2+). Substrate-binding residues include glutamate 211 and aspartate 296. Aspartate 296 contacts Zn(2+).

It belongs to the metallo-dependent hydrolases superfamily. MTA/SAH deaminase family. Zn(2+) serves as cofactor.

It carries out the reaction S-adenosyl-L-homocysteine + H2O + H(+) = S-inosyl-L-homocysteine + NH4(+). The catalysed reaction is S-methyl-5'-thioadenosine + H2O + H(+) = S-methyl-5'-thioinosine + NH4(+). In terms of biological role, catalyzes the deamination of 5-methylthioadenosine and S-adenosyl-L-homocysteine into 5-methylthioinosine and S-inosyl-L-homocysteine, respectively. Is also able to deaminate adenosine. The chain is 5-methylthioadenosine/S-adenosylhomocysteine deaminase from Caldicellulosiruptor saccharolyticus (strain ATCC 43494 / DSM 8903 / Tp8T 6331).